We begin with the raw amino-acid sequence, 711 residues long: Taperin (711 aa).

3 disordered regions span residues 134–305 (SRLL…APKP), 328–384 (RNSF…LGKS), and 414–438 (QRPS…GLRV). The span at 157-180 (PPPPPPPPAPPRPPPAAPSPPAAP) shows a compositional bias: pro residues. Residues 197–206 (LQKTGSNSFT) show a composition bias toward polar residues. Ser241 is modified (phosphoserine). The span at 267–282 (TPSATPASPPASATPS) shows a compositional bias: low complexity. Residues 283 to 296 (QRQCVSAATSTNDS) are compositionally biased toward polar residues. Ser362, Ser418, and Ser463 each carry phosphoserine. 4 disordered regions span residues 500-535 (TFTV…EEAS), 572-630 (SRKK…EKPF), 642-662 (SVRP…SYTP), and 674-711 (QALE…ALYF). Composition is skewed to polar residues over residues 512-521 (LQDQHFSQAN) and 581-590 (NDKSLQTTFE). Residues 597–624 (LEQEEEVDQQEEEEEEEEEEEEEEEGSG) show a composition bias toward acidic residues.

This sequence belongs to the taperin family. Interacts with GRXCR2; the interaction restricts TPRN to the stereocilum basal region. Interacts with actin ACTB; the interaction may stabilize stereocilia. Interacts with CLIC5. Interacts with PTPRQ. TPRN, CLIC5 and PTPQR form concentric rings at the base of stereocilia and may form a complex. Interacts with phosphatase PPP1CA; the interaction results in inhibition of PPC1A phosphatase activity. Interacts with DNA damage response proteins XRCC6/KU70, XRCC5/KU80, PARP1, TOP1 and TOP2A; these interactions recruit TPRN to sites of DNA damage where it may play a role in DNA repair. Expression is detected in fetal cochlea.

It localises to the cell projection. The protein resides in the stereocilium. It is found in the microvillus. The protein localises to the nucleus. Its subcellular location is the nucleoplasm. It localises to the cytoplasm. Its function is as follows. Essential for hearing. Required for maintenance of stereocilia on both inner and outer hair cells. Necessary for the integrity of the stereociliary rootlet. May act as an actin cytoskeleton regulator involved in the regulation of actin dynamics at the pointed end in hair cells. Forms rings at the base of stereocilia and binds actin filaments in the stereocilia which may stabilize the stereocilia. Acts as a strong inhibitor of PPP1CA phosphatase activity. Recruited to sites of DNA damage and may play a role in DNA damage repair. The polypeptide is Taperin (TPRN) (Homo sapiens (Human)).